The primary structure comprises 332 residues: Thiosulfate-binding protein (332 aa).

Positions 1–22 (MKRLFSASLLAAGLALGGAAHA) are cleaved as a signal peptide.

This sequence belongs to the prokaryotic sulfate-binding protein family.

It localises to the periplasm. Its function is as follows. Binds thiosulfate specifically and with high affinity. Has no detectable affinity for sulfate. This is Thiosulfate-binding protein from Pseudomonas aeruginosa (strain ATCC 15692 / DSM 22644 / CIP 104116 / JCM 14847 / LMG 12228 / 1C / PRS 101 / PAO1).